A 182-amino-acid chain; its full sequence is UPF0301 protein MCA0413 1 (182 aa).

Belongs to the UPF0301 (AlgH) family.

This Methylococcus capsulatus (strain ATCC 33009 / NCIMB 11132 / Bath) protein is UPF0301 protein MCA0413 1.